The chain runs to 346 residues: G-protein coupled receptor homolog U12 (346 aa).

Over 1–31 the chain is Extracellular; it reads MICYSFAKNVTFAFLIILQNFFSQHDEEYKY. A helical membrane pass occupies residues 32–56; it reads NYTCITPTVRKAQRLESVINGIMLT. Residues 57–83 lie on the Cytoplasmic side of the membrane; that stretch reads LILPVSTVVICTLLIYYKWTKQTITSP. The chain crosses the membrane as a helical span at residues 84 to 108; the sequence is YLITLFISDSLHSLTVLLLTLNREA. At 109 to 115 the chain is on the extracellular side; the sequence is LTNLNQA. A helical transmembrane segment spans residues 116–142; it reads LCQCVLFVYSASCTYSLCMLAVISTIR. The Cytoplasmic portion of the chain corresponds to 143-159; that stretch reads YRTLQRRTLNDKNNNHI. A helical transmembrane segment spans residues 160–181; sequence KRNVGILFLSSAMCAIPAVLYV. At 182-208 the chain is on the extracellular side; the sequence is QVEKKKGNYGKCNIHISTQKAYDLFIG. The helical transmembrane segment at 209–229 threads the bilayer; it reads IKIVYCFLWGIFPTVIFSYFY. Residues 230-245 lie on the Cytoplasmic side of the membrane; it reads VIFGKTLRALTQSKHN. Residues 246-272 form a helical membrane-spanning segment; the sequence is KTLSFISLLILSFLCIQIPNLLVMSVE. The Extracellular portion of the chain corresponds to 273–286; the sequence is IFFLYIANTSCLGT. The helical transmembrane segment at 287-310 threads the bilayer; the sequence is IQREIVQIISRLMPEIHCLSNPLV. Topologically, residues 311 to 346 are cytoplasmic; it reads YAFTRTDFRLRFYDFIKCNLCNSSLKRKRNPLTIKN.

The protein belongs to the G-protein coupled receptor 1 family.

The protein localises to the host cell membrane. In Homo sapiens (Human), this protein is G-protein coupled receptor homolog U12 (U12).